We begin with the raw amino-acid sequence, 612 residues long: Vitamin B12 transporter BtuB (612 aa).

An N-terminal signal peptide occupies residues 1-20 (MIKKSLLCTALSVTAFSGWA). The TonB box signature appears at 26-33 (DTLVVTAN). Residues 38 to 152 (PRSAVLAPIT…IGGVVNIITT (115 aa)) form the TBDR plug domain. Cyanocob(III)alamin-binding positions include S85, N92, and 110-111 (VS). The TBDR beta-barrel domain occupies 155–612 (KPGTELTAGV…EYTLSGSYTF (458 aa)). A run of 3 beta stranded transmembrane segments spans residues 158–165 (TELTAGVG), 169–178 (YQNYDVSTQQ), and 184–195 (TRVTLMGDYAYT). Residues D199, Q211, D213, and D215 each coordinate Ca(2+). 2 beta stranded membrane passes run 217 to 227 (FLSKTLYGALE) and 232 to 248 (DTWS…NRTN). Ca(2+) is bound by residues Y249, D250, and D261. 14 beta stranded membrane-spanning segments follow: residues 263–277 (RKLY…LRFN), 279–296 (ELIQ…KDYN), 309–325 (TLDE…NSIV), 328–337 (HGNVGAGVDW), 353–369 (YDQR…QQLG), 371–381 (FTFEGAARSDD), 385–400 (FGRH…WEFI), 403–417 (YRFI…KAPN), 434–443 (QSKQWEGAFE), 449–458 (VNWRVSGYRN), 473–490 (YFNE…TANF), 494–509 (PLAH…SRNA), 517–529 (RRSK…QLDW), and 535–550 (DWGL…YDTD). T309 contributes to the cyanocob(III)alamin binding site. R517 is a binding site for cyanocob(III)alamin. Y551 contacts cyanocob(III)alamin. 3 consecutive transmembrane segments (beta stranded) span residues 556–570 (PVKM…LAVS), 583–594 (IANRFDKDYETV), and 600–612 (AGRE…SYTF). A TonB C-terminal box motif is present at residues 595-612 (YGYATAGREYTLSGSYTF).

The protein belongs to the TonB-dependent receptor family. BtuB (TC 1.B.14.3.1) subfamily.

It is found in the cell outer membrane. Its function is as follows. Involved in the active translocation of vitamin B12 (cyanocobalamin) across the outer membrane to the periplasmic space. It derives its energy for transport by interacting with the trans-periplasmic membrane protein TonB. The protein is Vitamin B12 transporter BtuB of Citrobacter freundii.